The sequence spans 146 residues: D-aminoacyl-tRNA deacylase (146 aa).

A Gly-cisPro motif, important for rejection of L-amino acids motif is present at residues 138-139 (GP).

The protein belongs to the DTD family. In terms of assembly, homodimer.

Its subcellular location is the cytoplasm. The catalysed reaction is glycyl-tRNA(Ala) + H2O = tRNA(Ala) + glycine + H(+). It catalyses the reaction a D-aminoacyl-tRNA + H2O = a tRNA + a D-alpha-amino acid + H(+). Its function is as follows. An aminoacyl-tRNA editing enzyme that deacylates mischarged D-aminoacyl-tRNAs. Also deacylates mischarged glycyl-tRNA(Ala), protecting cells against glycine mischarging by AlaRS. Acts via tRNA-based rather than protein-based catalysis; rejects L-amino acids rather than detecting D-amino acids in the active site. By recycling D-aminoacyl-tRNA to D-amino acids and free tRNA molecules, this enzyme counteracts the toxicity associated with the formation of D-aminoacyl-tRNA entities in vivo and helps enforce protein L-homochirality. The protein is D-aminoacyl-tRNA deacylase of Xanthomonas euvesicatoria pv. vesicatoria (strain 85-10) (Xanthomonas campestris pv. vesicatoria).